The primary structure comprises 300 residues: MKTGNLFNTVALVGRSNTPGIAEPLATLAACIAKRGFEVVFEGDTAREIGISGYPALTPAEIGARADVAVVLGGDGTMLGIGRQLAPYRTPLIGINHGRLGFITDIAAADMQALVPVMLSGKFEREERSLLEARIVRDGEPIYHALAFNDVVVNRSGFSGMVELRASVDGRYMYNQRSDGLIVATPTGSTAYALSSAGPILHPQLQGIVLVPIAPHALSNRPIVLPDDSKIAIQIVGGRDVNVNFDMQSFTALELNDTIEVRRSKHTVPFLHPIGYSYYATLRKKLHWNEHASNEDDKAS.

The active-site Proton acceptor is aspartate 75. NAD(+)-binding positions include 75 to 76 (DG), 149 to 150 (ND), arginine 177, aspartate 179, 190 to 195 (TAYALS), alanine 214, and glutamine 248.

It belongs to the NAD kinase family. A divalent metal cation serves as cofactor.

Its subcellular location is the cytoplasm. It carries out the reaction NAD(+) + ATP = ADP + NADP(+) + H(+). In terms of biological role, involved in the regulation of the intracellular balance of NAD and NADP, and is a key enzyme in the biosynthesis of NADP. Catalyzes specifically the phosphorylation on 2'-hydroxyl of the adenosine moiety of NAD to yield NADP. The protein is NAD kinase of Burkholderia multivorans (strain ATCC 17616 / 249).